The sequence spans 135 residues: Large ribosomal subunit protein uL16c (135 aa).

It belongs to the universal ribosomal protein uL16 family. Part of the 50S ribosomal subunit.

It localises to the plastid. It is found in the chloroplast. The polypeptide is Large ribosomal subunit protein uL16c (Daucus carota (Wild carrot)).